Consider the following 251-residue polypeptide: tRNA (guanine-N(1)-)-methyltransferase (251 aa).

Residues glycine 117 and 137 to 142 (IGDYVL) each bind S-adenosyl-L-methionine.

The protein belongs to the RNA methyltransferase TrmD family. As to quaternary structure, homodimer.

It localises to the cytoplasm. The enzyme catalyses guanosine(37) in tRNA + S-adenosyl-L-methionine = N(1)-methylguanosine(37) in tRNA + S-adenosyl-L-homocysteine + H(+). Specifically methylates guanosine-37 in various tRNAs. The sequence is that of tRNA (guanine-N(1)-)-methyltransferase from Actinobacillus pleuropneumoniae serotype 5b (strain L20).